A 280-amino-acid chain; its full sequence is Energy-coupling factor transporter ATP-binding protein EcfA2 (280 aa).

In terms of domain architecture, ABC transporter spans 3–245 (IEFKNVSYTY…VELLESKQLG (243 aa)). 40–47 (GHTGSGKS) serves as a coordination point for ATP.

It belongs to the ABC transporter superfamily. Energy-coupling factor EcfA family. In terms of assembly, forms a stable energy-coupling factor (ECF) transporter complex composed of 2 membrane-embedded substrate-binding proteins (S component), 2 ATP-binding proteins (A component) and 2 transmembrane proteins (T component).

It localises to the cell membrane. ATP-binding (A) component of a common energy-coupling factor (ECF) ABC-transporter complex. Unlike classic ABC transporters this ECF transporter provides the energy necessary to transport a number of different substrates. The polypeptide is Energy-coupling factor transporter ATP-binding protein EcfA2 (Streptococcus agalactiae serotype Ia (strain ATCC 27591 / A909 / CDC SS700)).